Consider the following 676-residue polypeptide: Rho guanine nucleotide exchange factor 37 (676 aa).

The interval 1–26 (MADFETDEASSKSESPEQEGQGSEDK) is disordered. The DH domain occupies 30-213 (HQRLAIRELI…QDVNSNINEY (184 aa)). A BAR domain is found at 254 to 455 (LKQEAGLVPR…LPHRHVSEPD (202 aa)). 2 SH3 domains span residues 506-569 (GPGK…LYHP) and 603-666 (PTMS…RTPS). Disordered regions lie at residues 568 to 601 (HPIN…SVPT) and 657 to 676 (PSNF…NLPS).

Functionally, may act as a guanine nucleotide exchange factor (GEF). In Rattus norvegicus (Rat), this protein is Rho guanine nucleotide exchange factor 37 (Arhgef37).